A 345-amino-acid chain; its full sequence is Phosphoribosylformylglycinamidine cyclo-ligase (345 aa).

The protein belongs to the AIR synthase family.

It localises to the cytoplasm. The enzyme catalyses 2-formamido-N(1)-(5-O-phospho-beta-D-ribosyl)acetamidine + ATP = 5-amino-1-(5-phospho-beta-D-ribosyl)imidazole + ADP + phosphate + H(+). It participates in purine metabolism; IMP biosynthesis via de novo pathway; 5-amino-1-(5-phospho-D-ribosyl)imidazole from N(2)-formyl-N(1)-(5-phospho-D-ribosyl)glycinamide: step 2/2. The polypeptide is Phosphoribosylformylglycinamidine cyclo-ligase (Klebsiella pneumoniae (strain 342)).